The following is a 156-amino-acid chain: Small ribosomal subunit protein uS7 (156 aa).

Belongs to the universal ribosomal protein uS7 family. As to quaternary structure, part of the 30S ribosomal subunit. Contacts proteins S9 and S11.

In terms of biological role, one of the primary rRNA binding proteins, it binds directly to 16S rRNA where it nucleates assembly of the head domain of the 30S subunit. Is located at the subunit interface close to the decoding center, probably blocks exit of the E-site tRNA. The chain is Small ribosomal subunit protein uS7 from Shewanella sp. (strain MR-7).